A 202-amino-acid polypeptide reads, in one-letter code: Guanylate kinase (202 aa).

The Guanylate kinase-like domain maps to 3–181; sequence GNLFIITAPS…ALEDLRAIIR (179 aa). Position 10–17 (10–17) interacts with ATP; the sequence is APSGAGKT.

It belongs to the guanylate kinase family.

It localises to the cytoplasm. The catalysed reaction is GMP + ATP = GDP + ADP. Its function is as follows. Essential for recycling GMP and indirectly, cGMP. In Methylobacillus flagellatus (strain ATCC 51484 / DSM 6875 / VKM B-1610 / KT), this protein is Guanylate kinase.